Consider the following 553-residue polypeptide: Chaperonin GroEL 2 (553 aa).

ATP-binding positions include 29 to 32 (TLGP), 86 to 90 (DGTTT), glycine 414, and aspartate 495.

It belongs to the chaperonin (HSP60) family. In terms of assembly, forms a cylinder of 14 subunits composed of two heptameric rings stacked back-to-back. Interacts with the co-chaperonin GroES.

It localises to the cytoplasm. It carries out the reaction ATP + H2O + a folded polypeptide = ADP + phosphate + an unfolded polypeptide.. Its function is as follows. Together with its co-chaperonin GroES, plays an essential role in assisting protein folding. The GroEL-GroES system forms a nano-cage that allows encapsulation of the non-native substrate proteins and provides a physical environment optimized to promote and accelerate protein folding. This Gloeobacter violaceus (strain ATCC 29082 / PCC 7421) protein is Chaperonin GroEL 2.